The chain runs to 171 residues: NADH-quinone oxidoreductase subunit B (171 aa).

Residues Cys34, Cys35, Cys99, and Cys128 each contribute to the [4Fe-4S] cluster site.

It belongs to the complex I 20 kDa subunit family. In terms of assembly, NDH-1 is composed of 14 different subunits. Subunits NuoB, C, D, E, F, and G constitute the peripheral sector of the complex. The cofactor is [4Fe-4S] cluster.

The protein localises to the cell inner membrane. The enzyme catalyses a quinone + NADH + 5 H(+)(in) = a quinol + NAD(+) + 4 H(+)(out). In terms of biological role, NDH-1 shuttles electrons from NADH, via FMN and iron-sulfur (Fe-S) centers, to quinones in the respiratory chain. The immediate electron acceptor for the enzyme in this species is believed to be ubiquinone. Couples the redox reaction to proton translocation (for every two electrons transferred, four hydrogen ions are translocated across the cytoplasmic membrane), and thus conserves the redox energy in a proton gradient. The sequence is that of NADH-quinone oxidoreductase subunit B from Sulfurihydrogenibium sp. (strain YO3AOP1).